Here is a 167-residue protein sequence, read N- to C-terminus: Transcription antitermination protein NusB (167 aa).

The disordered stretch occupies residues 1-21 (MIPTDTAPPSKPAQGHKGYKN).

The protein belongs to the NusB family.

Its function is as follows. Involved in transcription antitermination. Required for transcription of ribosomal RNA (rRNA) genes. Binds specifically to the boxA antiterminator sequence of the ribosomal RNA (rrn) operons. The sequence is that of Transcription antitermination protein NusB from Nitrosomonas eutropha (strain DSM 101675 / C91 / Nm57).